Consider the following 133-residue polypeptide: Ribosome-binding factor A (133 aa).

This sequence belongs to the RbfA family. Monomer. Binds 30S ribosomal subunits, but not 50S ribosomal subunits or 70S ribosomes.

The protein resides in the cytoplasm. In terms of biological role, one of several proteins that assist in the late maturation steps of the functional core of the 30S ribosomal subunit. Associates with free 30S ribosomal subunits (but not with 30S subunits that are part of 70S ribosomes or polysomes). Required for efficient processing of 16S rRNA. May interact with the 5'-terminal helix region of 16S rRNA. This Acinetobacter baumannii (strain ACICU) protein is Ribosome-binding factor A.